The sequence spans 930 residues: Kinesin-like protein KIN-7J (930 aa).

The region spanning 9 to 273 (KILVSVRVRP…TLGTVIRKLR (265 aa)) is the Kinesin motor domain. 95–102 (GQTSSGKT) is an ATP binding site. 2 disordered regions span residues 449–569 (LKNS…IGTD) and 655–686 (MQTK…SLKD). Low complexity predominate over residues 459 to 468 (SVEAQESQES). Composition is skewed to basic and acidic residues over residues 473 to 482 (EQMKNEERKM) and 533 to 558 (AKLD…KDCN). The span at 666 to 681 (TSSISFDSGSSTSIDT) shows a compositional bias: low complexity. Lysine 805 is covalently cross-linked (Glycyl lysine isopeptide (Lys-Gly) (interchain with G-Cter in ubiquitin)).

This sequence belongs to the TRAFAC class myosin-kinesin ATPase superfamily. Kinesin family. KIN-7 subfamily.

The polypeptide is Kinesin-like protein KIN-7J (Arabidopsis thaliana (Mouse-ear cress)).